The sequence spans 456 residues: Exodeoxyribonuclease 7 large subunit (456 aa).

This sequence belongs to the XseA family. As to quaternary structure, heterooligomer composed of large and small subunits.

Its subcellular location is the cytoplasm. The catalysed reaction is Exonucleolytic cleavage in either 5'- to 3'- or 3'- to 5'-direction to yield nucleoside 5'-phosphates.. Its function is as follows. Bidirectionally degrades single-stranded DNA into large acid-insoluble oligonucleotides, which are then degraded further into small acid-soluble oligonucleotides. The chain is Exodeoxyribonuclease 7 large subunit from Shigella dysenteriae serotype 1 (strain Sd197).